A 209-amino-acid polypeptide reads, in one-letter code: High frequency lysogenization protein HflD homolog (209 aa).

Belongs to the HflD family.

The protein resides in the cytoplasm. It localises to the cell inner membrane. This is High frequency lysogenization protein HflD homolog from Proteus mirabilis (strain HI4320).